A 296-amino-acid chain; its full sequence is Fructose-bisphosphate aldolase class 1 (296 aa).

Glu175 acts as the Proton acceptor in catalysis. Catalysis depends on Lys212, which acts as the Schiff-base intermediate with dihydroxyacetone-P.

It belongs to the class I fructose-bisphosphate aldolase family.

The enzyme catalyses beta-D-fructose 1,6-bisphosphate = D-glyceraldehyde 3-phosphate + dihydroxyacetone phosphate. It functions in the pathway carbohydrate degradation; glycolysis; D-glyceraldehyde 3-phosphate and glycerone phosphate from D-glucose: step 4/4. The polypeptide is Fructose-bisphosphate aldolase class 1 (Staphylococcus aureus (strain MSSA476)).